The following is a 620-amino-acid chain: Probably inactive leucine-rich repeat receptor-like protein kinase At5g48380 (620 aa).

The first 27 residues, 1–27 (MMMGRLVFVIWLYNCLCLLLLSSLVDA), serve as a signal peptide directing secretion. Residues 28–228 (DQANIDCLRT…SASSSRGKVV (201 aa)) are Extracellular-facing. Residues asparagine 56, asparagine 111, asparagine 119, and asparagine 147 are each glycosylated (N-linked (GlcNAc...) asparagine). 4 LRR repeats span residues 101–124 (DLTG…STLI), 126–148 (LVTI…ISNI), 150–172 (FLNT…LAQL), and 174–196 (RLKT…NQTL). N-linked (GlcNAc...) asparagine glycosylation occurs at asparagine 193. The helical transmembrane segment at 229–249 (IIAAVGGLTAAALVVGVVLFF) threads the bilayer. Over 250-620 (YFRKLGAVRK…DFIEELIVAR (371 aa)) the chain is Cytoplasmic. Threonine 300 carries the post-translational modification Phosphothreonine. The Protein kinase domain occupies 303–596 (FKKDNIIATG…RAIGESYNFT (294 aa)). ATP-binding positions include 309-317 (IATGRTGTM) and lysine 331. Threonine 463 bears the Phosphothreonine mark. Tyrosine 479 is subject to Phosphotyrosine. Threonine 482 is subject to Phosphothreonine.

Belongs to the protein kinase superfamily. Ser/Thr protein kinase family.

It is found in the cell membrane. The chain is Probably inactive leucine-rich repeat receptor-like protein kinase At5g48380 from Arabidopsis thaliana (Mouse-ear cress).